The sequence spans 299 residues: tRNA dimethylallyltransferase (299 aa).

11–18 (GPTAVGKT) provides a ligand contact to ATP. Substrate is bound at residue 13 to 18 (TAVGKT). Residues 36 to 39 (DSQQ) are interaction with substrate tRNA.

This sequence belongs to the IPP transferase family. Monomer. Mg(2+) is required as a cofactor.

It carries out the reaction adenosine(37) in tRNA + dimethylallyl diphosphate = N(6)-dimethylallyladenosine(37) in tRNA + diphosphate. In terms of biological role, catalyzes the transfer of a dimethylallyl group onto the adenine at position 37 in tRNAs that read codons beginning with uridine, leading to the formation of N6-(dimethylallyl)adenosine (i(6)A). The protein is tRNA dimethylallyltransferase of Streptococcus pyogenes serotype M28 (strain MGAS6180).